A 495-amino-acid chain; its full sequence is Type-1 histone deacetylase 1 (495 aa).

D94 serves as a coordination point for substrate. Residue H136 is the Proton acceptor of the active site. Substrate is bound at residue G144. Residues D171, H173, and D259 each coordinate a divalent metal cation. Y298 contributes to the substrate binding site. Positions 372–495 are disordered; it reads PAAAHHDIPP…EDADVDMDSG (124 aa). A compositionally biased stretch (basic and acidic residues) spans 396-413; it reads DVRISEADRDKKVHHQGE. Residues 425 to 443 show a composition bias toward polar residues; it reads NYSNGLEATSTSRRNQVSI. Residues 454-480 show a composition bias toward low complexity; sequence NSRNNNNNNNNNNNNNNNNNNNSNNNN.

The protein belongs to the histone deacetylase family. HD type 1 subfamily.

It is found in the nucleus. The protein localises to the cytoplasm. The catalysed reaction is N(6)-acetyl-L-lysyl-[histone] + H2O = L-lysyl-[histone] + acetate. In terms of biological role, responsible for the deacetylation of lysine residues on the N-terminal part of the core histones (H2A, H2B, H3 and H4). Histone deacetylation plays an important role in transcriptional regulation, cell cycle progression and developmental events. Histone deacetylases act via the formation of large multiprotein complexes. This Dictyostelium discoideum (Social amoeba) protein is Type-1 histone deacetylase 1 (hdaA).